A 179-amino-acid polypeptide reads, in one-letter code: RNA pyrophosphohydrolase (179 aa).

One can recognise a Nudix hydrolase domain in the interval 6–149 (GYRANVGIVI…KKPIYEDMLK (144 aa)). A Nudix box motif is present at residues 38–59 (GGIDFGESELDALFRELNEEIG).

The protein belongs to the Nudix hydrolase family. RppH subfamily. A divalent metal cation is required as a cofactor.

Its function is as follows. Accelerates the degradation of transcripts by removing pyrophosphate from the 5'-end of triphosphorylated RNA, leading to a more labile monophosphorylated state that can stimulate subsequent ribonuclease cleavage. This is RNA pyrophosphohydrolase from Ruthia magnifica subsp. Calyptogena magnifica.